Reading from the N-terminus, the 469-residue chain is Adenosylhomocysteinase (469 aa).

3 residues coordinate substrate: threonine 63, aspartate 139, and glutamate 164. 165-167 is an NAD(+) binding site; the sequence is TTT. Substrate-binding residues include lysine 194 and aspartate 198. Residues asparagine 199, 228 to 233, glutamate 251, asparagine 300, 321 to 323, and asparagine 375 contribute to the NAD(+) site; these read GYGDVG and IGH.

It belongs to the adenosylhomocysteinase family. NAD(+) serves as cofactor.

The protein localises to the cytoplasm. The catalysed reaction is S-adenosyl-L-homocysteine + H2O = L-homocysteine + adenosine. It functions in the pathway amino-acid biosynthesis; L-homocysteine biosynthesis; L-homocysteine from S-adenosyl-L-homocysteine: step 1/1. May play a key role in the regulation of the intracellular concentration of adenosylhomocysteine. This chain is Adenosylhomocysteinase, found in Pseudomonas putida (strain W619).